The sequence spans 108 residues: UPF0060 membrane protein RSKD131_0092 (108 aa).

4 consecutive transmembrane segments (helical) span residues 5 to 25 (LAAY…VWAW), 32 to 52 (ALWL…LALT), 62 to 82 (AVYG…VEGV), and 86 to 106 (RWDM…LWAP).

The protein belongs to the UPF0060 family.

It is found in the cell inner membrane. The protein is UPF0060 membrane protein RSKD131_0092 of Cereibacter sphaeroides (strain KD131 / KCTC 12085) (Rhodobacter sphaeroides).